The chain runs to 103 residues: PTS system oligo-beta-mannoside-specific EIIB component (103 aa).

The PTS EIIB type-3 domain occupies Met-1–Gln-103. The Phosphocysteine intermediate role is filled by Cys-8. The residue at position 8 (Cys-8) is a Phosphocysteine; by EIIA.

It localises to the cytoplasm. The catalysed reaction is D-cellobiose(out) + N(pros)-phospho-L-histidyl-[protein] = 6-phospho-beta-D-glucosyl-(1-&gt;4)-D-glucose(in) + L-histidyl-[protein]. The phosphoenolpyruvate-dependent sugar phosphotransferase system (sugar PTS), a major carbohydrate active transport system, catalyzes the phosphorylation of incoming sugar substrates concomitantly with their translocation across the cell membrane. The enzyme II GmuABC PTS system is involved in the transport of oligo-glucomannans such as cellobiose or mannobiose. In Bacillus subtilis (strain 168), this protein is PTS system oligo-beta-mannoside-specific EIIB component.